Here is a 269-residue protein sequence, read N- to C-terminus: Leucinostatins biosynthesis cluster protein T (269 aa).

The first 15 residues, 1–15, serve as a signal peptide directing secretion; that stretch reads MHIILTGTGLVGAIA. N-linked (GlcNAc...) asparagine glycosylation occurs at asparagine 254.

Its function is as follows. Part of the gene cluster that mediates the biosynthesis of the lipopeptide antibiotics leucinostatins that show extensive biological activities, including antimalarial, antiviral, antibacterial, antifungal, and antitumor activities, as well as phytotoxic. The function of lcsT within the leucinostatins biosynthesis has not been identified yet. The polypeptide is Leucinostatins biosynthesis cluster protein T (Purpureocillium lilacinum (Paecilomyces lilacinus)).